Here is a 258-residue protein sequence, read N- to C-terminus: Spindlin-3 (258 aa).

A disordered region spans residues 1-23 (MKTPFGKAAAGQRSRTGAGHGSV). Tudor-like domain stretches follow at residues 50-99 (VGCR…LELH), 129-178 (VGKA…YQLL), and 210-255 (VGKQ…YDLV). 2 histone H3K4me3 and H3R8me2a binding regions span residues Glu-138 and 246–248 (DFH).

Belongs to the SPIN/STSY family. Interacts with C11orf84/SPINDOC.

Functionally, exhibits H3K4me3-binding activity. The polypeptide is Spindlin-3 (SPIN3) (Pongo abelii (Sumatran orangutan)).